A 337-amino-acid polypeptide reads, in one-letter code: Phenylalanine--tRNA ligase alpha subunit (337 aa).

Glutamate 252 contacts Mg(2+).

This sequence belongs to the class-II aminoacyl-tRNA synthetase family. Phe-tRNA synthetase alpha subunit type 1 subfamily. In terms of assembly, tetramer of two alpha and two beta subunits. The cofactor is Mg(2+).

The protein localises to the cytoplasm. The catalysed reaction is tRNA(Phe) + L-phenylalanine + ATP = L-phenylalanyl-tRNA(Phe) + AMP + diphosphate + H(+). The polypeptide is Phenylalanine--tRNA ligase alpha subunit (Francisella tularensis subsp. mediasiatica (strain FSC147)).